The following is a 650-amino-acid chain: NAC domain-containing protein 54 (650 aa).

An NAC domain is found at 6-156 (LPPGFRFHPT…AYALCRVFKK (151 aa)). A DNA-binding region spans residues 105 to 162 (VGMKKTLVYYRGRAPHGSRTDWVMHEYRLDERECETDTGLQDAYALCRVFKKTAPGPK).

Expressed in leaves, roots and flowers.

The protein resides in the nucleus. Functionally, transcription factor that functions as a regulator of the jasmonate (JA) signaling pathway. May regulate the expression of genes encoding JA biosynthetic enzymes, such as lipoxygenase 7 (CM-LOX1), allene oxide synthase 2 (AOS2) and OPDA reductase 7 (OPR7). Involved in abscisic acid-induced leaf senescence. Activates the abscisic acid (ABA) signaling-associated gene ABI5 and the senescence-associated gene NYC1 by directly binding to the mitochondrial dysfunction motif (MDM) present in their promoters. Possesses transcriptional activator activity in yeast. Required for the multiplication of the rice dwarf virus (RDV). This Oryza sativa subsp. japonica (Rice) protein is NAC domain-containing protein 54.